Consider the following 96-residue polypeptide: MSVKIRLHLMGTKKRPFYRIVVADSRARRDGRFIEEVGYYNPITKPAEIKLNDDQIFNWLMKGAQPTNTVRNFLSDAGLMKKLHEAKLAAKKESKK.

It belongs to the bacterial ribosomal protein bS16 family.

The polypeptide is Small ribosomal subunit protein bS16 (Oenococcus oeni (strain ATCC BAA-331 / PSU-1)).